The primary structure comprises 352 residues: Probable dual-specificity RNA methyltransferase RlmN (352 aa).

The active-site Proton acceptor is glutamate 93. Residues 99–332 enclose the Radical SAM core domain; that stretch reads TAKRLTVCVS…ATVRQTRGLD (234 aa). A disulfide bridge connects residues cysteine 106 and cysteine 337. [4Fe-4S] cluster is bound by residues cysteine 113, cysteine 117, and cysteine 120. S-adenosyl-L-methionine is bound by residues 160–161, serine 190, 213–215, and asparagine 294; these read GE and SLH. Cysteine 337 (S-methylcysteine intermediate) is an active-site residue.

This sequence belongs to the radical SAM superfamily. RlmN family. The cofactor is [4Fe-4S] cluster.

The protein localises to the cytoplasm. The catalysed reaction is adenosine(2503) in 23S rRNA + 2 reduced [2Fe-2S]-[ferredoxin] + 2 S-adenosyl-L-methionine = 2-methyladenosine(2503) in 23S rRNA + 5'-deoxyadenosine + L-methionine + 2 oxidized [2Fe-2S]-[ferredoxin] + S-adenosyl-L-homocysteine. It catalyses the reaction adenosine(37) in tRNA + 2 reduced [2Fe-2S]-[ferredoxin] + 2 S-adenosyl-L-methionine = 2-methyladenosine(37) in tRNA + 5'-deoxyadenosine + L-methionine + 2 oxidized [2Fe-2S]-[ferredoxin] + S-adenosyl-L-homocysteine. Its function is as follows. Specifically methylates position 2 of adenine 2503 in 23S rRNA and position 2 of adenine 37 in tRNAs. This Synechococcus sp. (strain JA-2-3B'a(2-13)) (Cyanobacteria bacterium Yellowstone B-Prime) protein is Probable dual-specificity RNA methyltransferase RlmN.